The chain runs to 438 residues: Ribosomal protein uS12 methylthiotransferase RimO (438 aa).

The MTTase N-terminal domain maps to 4–120 (HSLFLLSLGC…ILASLGARYR (117 aa)). Cysteine 13, cysteine 49, cysteine 83, cysteine 144, cysteine 148, and cysteine 151 together coordinate [4Fe-4S] cluster. Positions 130-359 (LTPSHYAYLK…MELQEAVAES (230 aa)) constitute a Radical SAM core domain. Residues 362 to 429 (REFEGKEIEV…AHELYGEIVQ (68 aa)) enclose the TRAM domain.

The protein belongs to the methylthiotransferase family. RimO subfamily. The cofactor is [4Fe-4S] cluster.

The protein resides in the cytoplasm. The enzyme catalyses L-aspartate(89)-[ribosomal protein uS12]-hydrogen + (sulfur carrier)-SH + AH2 + 2 S-adenosyl-L-methionine = 3-methylsulfanyl-L-aspartate(89)-[ribosomal protein uS12]-hydrogen + (sulfur carrier)-H + 5'-deoxyadenosine + L-methionine + A + S-adenosyl-L-homocysteine + 2 H(+). Catalyzes the methylthiolation of an aspartic acid residue of ribosomal protein uS12. The sequence is that of Ribosomal protein uS12 methylthiotransferase RimO from Chlorobium chlorochromatii (strain CaD3).